The sequence spans 325 residues: Eukaryotic translation initiation factor 3 subunit I (325 aa).

WD repeat units lie at residues 8–47, 50–89, 144–183, 186–225, and 283–324; these read GHER…RLGT, GHTG…QLAL, CSDS…QLSN, EHTK…HLKT, and GHFG…FEFE.

The protein belongs to the eIF-3 subunit I family. In terms of assembly, component of the eukaryotic translation initiation factor 3 (eIF-3) complex, which is composed of 13 subunits: EIF3A, EIF3B, EIF3C, EIF3D, EIF3E, EIF3F, EIF3G, EIF3H, EIF3I, EIF3J, EIF3K, EIF3L and EIF3M.

Its subcellular location is the cytoplasm. Its function is as follows. Component of the eukaryotic translation initiation factor 3 (eIF-3) complex, which is involved in protein synthesis of a specialized repertoire of mRNAs and, together with other initiation factors, stimulates binding of mRNA and methionyl-tRNAi to the 40S ribosome. The eIF-3 complex specifically targets and initiates translation of a subset of mRNAs involved in cell proliferation. The sequence is that of Eukaryotic translation initiation factor 3 subunit I from Taeniopygia guttata (Zebra finch).